The chain runs to 33 residues: uncharacterized protein (33 aa).

Its subcellular location is the cytoplasm. It is found in the nucleus. This is an uncharacterized protein from Schizosaccharomyces pombe (strain 972 / ATCC 24843) (Fission yeast).